The chain runs to 91 residues: Pre-early 3 receptor internalization and degradation alpha protein (91 aa).

Over 1-4 (MIPR) the chain is Cytoplasmic. A propeptide spans 1-22 (MIPRVLILLTLVALFCACSTLA) (signal peptide). A helical transmembrane segment spans residues 5 to 25 (VLILLTLVALFCACSTLAAVA). Residues 26–34 (HIEVDCIPP) are Lumenal-facing. A helical membrane pass occupies residues 35-60 (FTVYLLYGFVTLILICSLVTVVIAFI). The Cytoplasmic portion of the chain corresponds to 61-91 (QFIDWVCVRIAYLRHHPQYRDRTIADLLRIL).

It belongs to the adenoviridae E3-RID-alpha family. Homodimer with only one chain cleaved by signal peptidase. Interacts with E3 RID-beta and E3 CR1-alpha. Post-translationally, the signal peptide is only cleaved partially by host signal peptidase. This results in two forms of the protein, one uncleaved with two transmembrane regions, and one cleaved with one transmembrane region.

The protein localises to the host membrane. It localises to the host endoplasmic reticulum. Prevents infected cell apoptosis induced by the host immune system. Acts by down-regulating a number of cell surface receptors in the tumor necrosis factor (TNF) receptor superfamily, namely FAS, TNFRSF10A/TRAIL receptor 1, and TNFRSF10B/TRAIL receptor 2. Down-regulation of these death receptors protects adenovirus-infected cells from apoptosis induced by the death receptor ligands Fas ligand and TRAIL. RID complex also down-regulates certain tyrosine kinase cell surface receptors, especially the epidermal growth factor receptor (EGFR). RID-mediated Fas and EGFR down-regulation occurs via endocytosis of the receptors into endosomes followed by transport to and degradation within lysosomes. The protein is Pre-early 3 receptor internalization and degradation alpha protein of Homo sapiens (Human).